Reading from the N-terminus, the 715-residue chain is Discoidin, CUB and LCCL domain-containing protein 1 (715 aa).

A signal peptide spans 1-34 (MVPGARGGGALARAAGRGLLALLLAVSAPLRLQA). Residues 35 to 459 (EELGDGCGHL…TSTGINITTV (425 aa)) are Extracellular-facing. Intrachain disulfides connect C41-C68 and C94-C112. The CUB domain maps to 41 to 150 (CGHLVTYQDS…RGFLLTYASS (110 aa)). N64 carries an N-linked (GlcNAc...) asparagine glycan. N124 is a glycosylation site (N-linked (GlcNAc...) asparagine). The 97-residue stretch at 152 to 248 (HPDLITCLER…RDGSLSDKRF (97 aa)) folds into the LCCL domain. 2 disulfide bridges follow: C158/C174 and C178/C200. An F5/8 type C domain is found at 248–412 (FLFTSNGCSR…IALKVELIGC (165 aa)). N277 carries N-linked (GlcNAc...) asparagine glycosylation. The interval 278–312 (ESGDQVHWSPGQARLQDQGPSWASGDSSNNHKPRE) is disordered. Residues 295 to 307 (QGPSWASGDSSNN) are compositionally biased toward polar residues. N351, N418, and N455 each carry an N-linked (GlcNAc...) asparagine glycan. Residues 460 to 480 (AIPLVLLVVLVFAGMGIFAAF) traverse the membrane as a helical segment. Over 481–715 (RKKKKKGSPY…LNQTAMTALL (235 aa)) the chain is Cytoplasmic. At S513 the chain carries Phosphoserine. T614 carries the phosphothreonine modification. The segment at 619–702 (SGYRVPGPQP…SDSYSAPRDC (84 aa)) is disordered.

Its subcellular location is the membrane. The chain is Discoidin, CUB and LCCL domain-containing protein 1 (DCBLD1) from Homo sapiens (Human).